We begin with the raw amino-acid sequence, 556 residues long: 2-succinyl-5-enolpyruvyl-6-hydroxy-3-cyclohexene-1-carboxylate synthase (556 aa).

This sequence belongs to the TPP enzyme family. MenD subfamily. Homodimer. The cofactor is Mg(2+). Requires Mn(2+) as cofactor. Thiamine diphosphate is required as a cofactor.

The enzyme catalyses isochorismate + 2-oxoglutarate + H(+) = 5-enolpyruvoyl-6-hydroxy-2-succinyl-cyclohex-3-ene-1-carboxylate + CO2. It participates in quinol/quinone metabolism; 1,4-dihydroxy-2-naphthoate biosynthesis; 1,4-dihydroxy-2-naphthoate from chorismate: step 2/7. It functions in the pathway quinol/quinone metabolism; menaquinone biosynthesis. Catalyzes the thiamine diphosphate-dependent decarboxylation of 2-oxoglutarate and the subsequent addition of the resulting succinic semialdehyde-thiamine pyrophosphate anion to isochorismate to yield 2-succinyl-5-enolpyruvyl-6-hydroxy-3-cyclohexene-1-carboxylate (SEPHCHC). The polypeptide is 2-succinyl-5-enolpyruvyl-6-hydroxy-3-cyclohexene-1-carboxylate synthase (Escherichia coli O127:H6 (strain E2348/69 / EPEC)).